Here is a 583-residue protein sequence, read N- to C-terminus: CTP synthase (583 aa).

The interval 1–278 (MRRHPQTATK…DAFVVRRLNL (278 aa)) is amidoligase domain. Serine 20 provides a ligand contact to CTP. Serine 20 is a UTP binding site. ATP contacts are provided by residues 21-26 (SLGKGL) and aspartate 78. Mg(2+) is bound by residues aspartate 78 and glutamate 152. CTP contacts are provided by residues 159–161 (DIE), 199–204 (KTKPTQ), and lysine 235. Residues 199-204 (KTKPTQ) and lysine 235 contribute to the UTP site. The region spanning 303–551 (RIALVGKYVE…VKAAIDYKEG (249 aa)) is the Glutamine amidotransferase type-1 domain. Residue glycine 366 coordinates L-glutamine. The active-site Nucleophile; for glutamine hydrolysis is the cysteine 393. L-glutamine contacts are provided by residues 394–397 (LGLQ), glutamate 416, and arginine 477. Residues histidine 524 and glutamate 526 contribute to the active site. Residues 559–583 (PERVSNGAERRDQVGQSIPEPANRG) form a disordered region.

It belongs to the CTP synthase family. Homotetramer.

The catalysed reaction is UTP + L-glutamine + ATP + H2O = CTP + L-glutamate + ADP + phosphate + 2 H(+). The enzyme catalyses L-glutamine + H2O = L-glutamate + NH4(+). It catalyses the reaction UTP + NH4(+) + ATP = CTP + ADP + phosphate + 2 H(+). The protein operates within pyrimidine metabolism; CTP biosynthesis via de novo pathway; CTP from UDP: step 2/2. Allosterically activated by GTP, when glutamine is the substrate; GTP has no effect on the reaction when ammonia is the substrate. The allosteric effector GTP functions by stabilizing the protein conformation that binds the tetrahedral intermediate(s) formed during glutamine hydrolysis. Inhibited by the product CTP, via allosteric rather than competitive inhibition. Its function is as follows. Catalyzes the ATP-dependent amination of UTP to CTP with either L-glutamine or ammonia as the source of nitrogen. Regulates intracellular CTP levels through interactions with the four ribonucleotide triphosphates. In Mycobacterium ulcerans (strain Agy99), this protein is CTP synthase.